A 519-amino-acid polypeptide reads, in one-letter code: Lysine histidine transporter-like 8 (519 aa).

Residues 1–44 (MDERPETELISIPATPRVSTPEILTPSGQRSPRPATKPSSATWT) form a disordered region. Topologically, residues 1 to 114 (MDERPETELI…NLNAGVGFQA (114 aa)) are cytoplasmic. The next 2 membrane-spanning stretches (helical) occupy residues 115–135 (LVLPVAFAFLGWSWGILSLTI) and 136–156 (AYCWQLYTLWILVQLHEAVPG). The Cytoplasmic segment spans residues 157-176 (KRYNRYVELAQAAFGERLGV). The chain crosses the membrane as a helical span at residues 177–197 (WLALFPTVYLSAGTATALILI). Topologically, residues 198–217 (GGETMKLFFQIVCGPLCTSN) are extracellular. The chain crosses the membrane as a helical span at residues 218–238 (PLTTVEWYLVFTSLCIVLSQL). The Cytoplasmic segment spans residues 239–243 (PNLNS). The chain crosses the membrane as a helical span at residues 244-264 (IAGLSLIGAVTAITYSTMVWV). The Extracellular segment spans residues 265 to 282 (LSVSQPRPATISYEPLSM). The helical transmembrane segment at 283 to 303 (PSTSGSLFAVLNALGIIAFAF) threads the bilayer. Residues 304–333 (RGHNLVLEIQSTMPSTFKHPAHVPMWRGAK) lie on the Cytoplasmic side of the membrane. The helical transmembrane segment at 334 to 354 (ISYFLIALCIFPISIGGFWAY) threads the bilayer. Residues 355 to 377 (GNLMPSGGMLAALYAFHIHDIPR) are Extracellular-facing. Residues 378–398 (GLLATAFLLVVFSCLSSFQIY) traverse the membrane as a helical segment. The Cytoplasmic segment spans residues 399–427 (SMPAFDSFEAGYTSRTNKPCSIWVRSGFR). The chain crosses the membrane as a helical span at residues 428-448 (VFFGFVSFFIGVALPFLSSLA). A topological domain (extracellular) is located at residue G449. The chain crosses the membrane as a helical span at residues 450 to 470 (LLGGLTLPVTFAYPCFMWVLI). The Cytoplasmic portion of the chain corresponds to 471-485 (KKPAKYSFNWYFHWG). A helical transmembrane segment spans residues 486 to 506 (LGWLGVAFSLAFSIGGIWSMV). At 507 to 519 (TNGLKLKFFKPPN) the chain is on the extracellular side.

Belongs to the amino acid/polyamine transporter 2 family. Amino acid/auxin permease (AAAP) (TC 2.A.18.2) subfamily.

Its subcellular location is the cell membrane. In terms of biological role, amino acid transporter. The chain is Lysine histidine transporter-like 8 (AATL1) from Arabidopsis thaliana (Mouse-ear cress).